A 157-amino-acid polypeptide reads, in one-letter code: Small ribosomal subunit protein bS16 (157 aa).

A compositionally biased stretch (basic and acidic residues) spans lysine 125–alanine 141. The segment at lysine 125 to glutamate 157 is disordered. Positions glutamate 142 to glutamate 157 are enriched in acidic residues.

It belongs to the bacterial ribosomal protein bS16 family.

In Corynebacterium kroppenstedtii (strain DSM 44385 / JCM 11950 / CIP 105744 / CCUG 35717), this protein is Small ribosomal subunit protein bS16.